Consider the following 490-residue polypeptide: Mitochondrial-processing peptidase subunit beta (490 aa).

A mitochondrion-targeting transit peptide spans methionine 1 to threonine 46. Histidine 102 contributes to the Zn(2+) binding site. The active-site Proton acceptor is glutamate 105. Zn(2+)-binding residues include histidine 106 and glutamate 182.

The protein belongs to the peptidase M16 family. In terms of assembly, heterodimer of PMPCA (alpha) and PMPCB (beta) subunits, forming the mitochondrial processing protease (MPP) in which PMPCA is involved in substrate recognition and binding and PMPCB is the catalytic subunit. Requires Zn(2+) as cofactor.

Its subcellular location is the mitochondrion matrix. The catalysed reaction is Release of N-terminal transit peptides from precursor proteins imported into the mitochondrion, typically with Arg in position P2.. With respect to regulation, binding to PMPCA is required for catalytic activity. Its function is as follows. Catalytic subunit of the essential mitochondrial processing protease (MPP), which cleaves the mitochondrial sequence off newly imported precursors proteins. Preferentially, cleaves after an arginine at position P2. Required for PINK1 turnover by coupling PINK1 mitochondrial import and cleavage, which results in subsequent PINK1 proteolysis. This chain is Mitochondrial-processing peptidase subunit beta (PMPCB), found in Bos taurus (Bovine).